We begin with the raw amino-acid sequence, 245 residues long: NAD-dependent protein deacylase (245 aa).

The Deacetylase sirtuin-type domain maps to 1–237 (MNFPYRNIVV…PKLVEELLAH (237 aa)). Residue 13–32 (GAGISAESGIQTFRAQDGLW) coordinates NAD(+). Positions 57 and 60 each coordinate substrate. 94-97 (QNID) lines the NAD(+) pocket. The active-site Proton acceptor is histidine 112. Residues cysteine 120 and cysteine 139 each coordinate Zn(2+). NAD(+)-binding positions include 179–181 (GTS), 205–207 (NLE), and alanine 223.

Belongs to the sirtuin family. Class III subfamily. It depends on Zn(2+) as a cofactor.

It is found in the cytoplasm. It carries out the reaction N(6)-acetyl-L-lysyl-[protein] + NAD(+) + H2O = 2''-O-acetyl-ADP-D-ribose + nicotinamide + L-lysyl-[protein]. The catalysed reaction is N(6)-succinyl-L-lysyl-[protein] + NAD(+) + H2O = 2''-O-succinyl-ADP-D-ribose + nicotinamide + L-lysyl-[protein]. Functionally, NAD-dependent lysine deacetylase and desuccinylase that specifically removes acetyl and succinyl groups on target proteins. Modulates the activities of several proteins which are inactive in their acylated form. The protein is NAD-dependent protein deacylase of Vibrio vulnificus (strain YJ016).